The following is a 61-amino-acid chain: Metallothionein-1F (61 aa).

Residue M1 is modified to N-acetylmethionine. A beta region spans residues 1 to 29 (MDPNCSCAAGVSCTCAGSCKCKECKCTSC). The a divalent metal cation site is built by C5, C7, C13, C15, C19, C21, C24, C26, C29, C33, C34, C36, C37, C41, C44, C48, C50, and C57. An alpha region spans residues 30–61 (KKSCCSCCPVGCSKCAQGCVCKGASEKCSCCD). A Phosphoserine modification is found at S58. C59 and C60 together coordinate a divalent metal cation.

This sequence belongs to the metallothionein superfamily. Type 1 family. Monomer.

Metallothioneins have a high content of cysteine residues that bind various heavy metals; these proteins are transcriptionally regulated by both heavy metals and glucocorticoids. This chain is Metallothionein-1F (MT1F), found in Homo sapiens (Human).